The sequence spans 507 residues: ATP synthase subunit alpha (507 aa).

ATP is bound at residue 168 to 175; that stretch reads GDRQTGKT.

This sequence belongs to the ATPase alpha/beta chains family. F-type ATPases have 2 components, CF(1) - the catalytic core - and CF(0) - the membrane proton channel. CF(1) has five subunits: alpha(3), beta(3), gamma(1), delta(1), epsilon(1). CF(0) has three main subunits: a(1), b(2) and c(9-12). The alpha and beta chains form an alternating ring which encloses part of the gamma chain. CF(1) is attached to CF(0) by a central stalk formed by the gamma and epsilon chains, while a peripheral stalk is formed by the delta and b chains.

It localises to the cell membrane. The catalysed reaction is ATP + H2O + 4 H(+)(in) = ADP + phosphate + 5 H(+)(out). Produces ATP from ADP in the presence of a proton gradient across the membrane. The alpha chain is a regulatory subunit. The polypeptide is ATP synthase subunit alpha (Mesomycoplasma hyopneumoniae (strain 232) (Mycoplasma hyopneumoniae)).